The following is a 1482-amino-acid chain: Cystic fibrosis transmembrane conductance regulator (1482 aa).

Topologically, residues 1-77 are cytoplasmic; sequence MQRSPLEKAS…KLINALRRCF (77 aa). The chain crosses the membrane as a helical span at residues 78–98; the sequence is FWRFTFYGIILYLGEVTKAVQ. Positions 81–365 constitute an ABC transmembrane type-1 1 domain; sequence FTFYGIILYL…WAVQTWYDSL (285 aa). The Extracellular segment spans residues 99-122; it reads PLLLGRIIASYDPDNKVERSIAIY. Residues 123-146 form a helical membrane-spanning segment; sequence LAVGLCLLFVVRTLLLHPAIFGLH. The Cytoplasmic segment spans residues 147–195; sequence HIGMQMRIAMFSLIYKKTLKLSSRVLDKISIGQLVSLLSNNLNKFDEGL. A helical membrane pass occupies residues 196-216; that stretch reads ALAHFVWIAPLQVTLLMGLLW. The Extracellular portion of the chain corresponds to 217–222; that stretch reads DLLQAS. A helical transmembrane segment spans residues 223–243; sequence AFSGLGVLIILACFQAGFGRM. Over 244–298 the chain is Cytoplasmic; it reads MMKYRDQRAGKINERLVITSEMIENIQSVKAYCWEEALEKMIENFRQSELRLTRK. Residues 299–319 form a helical membrane-spanning segment; it reads AAYVRYFNSSAFFFSGFFVVF. Over 320–339 the chain is Extracellular; it reads LSVLPYALIKGIILRKIFTT. Residues 340-358 form a helical membrane-spanning segment; the sequence is ISFCIVLRMAVTRQFPWAV. Residues 359–859 are Cytoplasmic-facing; that stretch reads QTWYDSLGAI…YLRYITVHKR (501 aa). Residues W401, S434, 458-465, and Q493 each bind ATP; that span reads GSTGAGKT. The ABC transporter 1 domain maps to 423–646; sequence NVDNSLFFSN…RPDFSSKLMG (224 aa). The S-palmitoyl cysteine moiety is linked to residue C524. S549 and S660 each carry phosphoserine. A disordered R region region spans residues 654 to 832; that stretch reads SAERRNSIIT…EEINEEDLKE (179 aa). At S670 the chain carries Phosphoserine; by PKA. At S686 the chain carries Phosphoserine. A Glycyl lysine isopeptide (Lys-Gly) (interchain with G-Cter in ubiquitin) cross-link involves residue K688. 2 positions are modified to phosphoserine: S700 and S712. Phosphothreonine is present on T717. Residues S737, S768, S796, and S814 each carry the phosphoserine modification. A helical membrane pass occupies residues 860–880; that stretch reads LIFVLIWCFVVFLIEVAASLV. The 297-residue stretch at 860–1156 folds into the ABC transmembrane type-1 2 domain; it reads LIFVLIWCFV…AVNSSIDVDS (297 aa). Topologically, residues 881 to 919 are extracellular; sequence LLCLLSKVSPEDKGNTTKSANDSSAVIITSTSSFYFLYI. N-linked (GlcNAc...) asparagine glycosylation is found at N895 and N901. A discontinuously helical membrane pass occupies residues 920-940; the sequence is YVGVADTFLALGLFRGLPLVH. Residues 941–991 are Cytoplasmic-facing; sequence TLITVSKILHHKMLHSVLQAPMSTLNTLKAGGILNRFSKDIAILDDLLPLT. Residues 992–1012 traverse the membrane as a helical segment; sequence IFDFIQLLLIVIGAVAVVSIL. Topologically, residues 1013–1014 are extracellular; sequence KP. The helical transmembrane segment at 1015 to 1035 threads the bilayer; sequence YIFLATVPVIVAFVLLRAYFL. Topologically, residues 1036 to 1096 are cytoplasmic; it reads HTSQQLKQLE…TANWFLYLST (61 aa). Residues 1097 to 1117 traverse the membrane as a helical segment; sequence LRWFQMRIEMIFVIFFIAVTF. Over 1118–1131 the chain is Extracellular; sequence ISILTTGEGEGTVG. The helical transmembrane segment at 1132 to 1152 threads the bilayer; it reads IILTLAMNIMSTLQWAVNSSI. Topologically, residues 1153–1482 are cytoplasmic; the sequence is DVDSLMRSVS…TEEEVQDTRL (330 aa). Residues 1212 to 1445 form the ABC transporter 2 domain; it reads MTVKDLTAKY…KSLFRQAISP (234 aa). Residues Y1221 and 1246 to 1253 each bind ATP; that span reads GRTGSGKS. The interval 1388–1482 is interaction with GORASP2; the sequence is RTLKQAFADC…TEEEVQDTRL (95 aa). A lipid anchor (S-palmitoyl cysteine) is attached at C1397. S1446 carries the post-translational modification Phosphoserine. A disordered region spans residues 1450 to 1482; sequence KLFPHQNSGKHKSRSKITALKEETEEEVQDTRL. The span at 1472 to 1482 shows a compositional bias: acidic residues; it reads ETEEEVQDTRL. A PDZ-binding motif is present at residues 1480 to 1482; sequence TRL.

It belongs to the ABC transporter superfamily. ABCC family. CFTR transporter (TC 3.A.1.202) subfamily. Monomer; does not require oligomerization for channel activity. May form oligomers in the membrane. Interacts with SLC26A3, SLC26A6 and NHERF1. Interacts with SHANK2. Interacts with MYO6. Interacts (via C-terminus) with GOPC (via PDZ domain); this promotes CFTR internalization and thereby decreases channel activity. Interacts with SLC4A7 through NHERF1. Found in a complex with MYO5B and RAB11A. Interacts with ANO1. Interacts with SLC26A8. Interacts with AHCYL1; the interaction increases CFTR activity. Interacts with CSE1L. The core-glycosylated form interacts with GORASP2 (via PDZ GRASP-type 1 domain) in respone to ER stress. Interacts with MARCHF2; the interaction leads to CFTR ubiqtuitination and degradation. Interacts with ADGRG2. N-glycosylated. Post-translationally, phosphorylated; cAMP treatment promotes phosphorylation and activates the channel. Dephosphorylation decreases the ATPase activity (in vitro). Phosphorylation at PKA sites activates the channel. Phosphorylation at PKC sites enhances the response to phosphorylation by PKA. Phosphorylated by AMPK; this inhibits channel activity. In terms of processing, ubiquitinated, leading to its degradation in the lysosome. Deubiquitination by USP10 in early endosomes enhances its endocytic recycling to the cell membrane. Ubiquitinated by RNF185 during ER stress. Ubiquitinated by MARCHF2.

Its subcellular location is the apical cell membrane. It localises to the early endosome membrane. The protein localises to the cell membrane. It is found in the recycling endosome membrane. The protein resides in the endoplasmic reticulum membrane. Its subcellular location is the nucleus. It carries out the reaction ATP + H2O + closed Cl(-) channel = ADP + phosphate + open Cl(-) channel.. The catalysed reaction is chloride(in) = chloride(out). It catalyses the reaction hydrogencarbonate(in) = hydrogencarbonate(out). The enzyme catalyses ATP + H2O = ADP + phosphate + H(+). In terms of biological role, epithelial ion channel that plays an important role in the regulation of epithelial ion and water transport and fluid homeostasis. Mediates the transport of chloride ions across the cell membrane. Possesses an intrinsic ATPase activity and utilizes ATP to gate its channel; the passive flow of anions through the channel is gated by cycles of ATP binding and hydrolysis by the ATP-binding domains. The ion channel is also permeable to HCO(3)(-); selectivity depends on the extracellular chloride concentration. Exerts its function also by modulating the activity of other ion channels and transporters. Contributes to the regulation of the pH and the ion content of the epithelial fluid layer. Modulates the activity of the epithelial sodium channel (ENaC) complex, in part by regulating the cell surface expression of the ENaC complex. May regulate bicarbonate secretion and salvage in epithelial cells by regulating the transporter SLC4A7. Can inhibit the chloride channel activity of ANO1. Plays a role in the chloride and bicarbonate homeostasis during sperm epididymal maturation and capacitation. The sequence is that of Cystic fibrosis transmembrane conductance regulator from Dasypus novemcinctus (Nine-banded armadillo).